A 425-amino-acid chain; its full sequence is Histidine--tRNA ligase 1 (425 aa).

The protein belongs to the class-II aminoacyl-tRNA synthetase family. Homodimer.

Its subcellular location is the cytoplasm. The enzyme catalyses tRNA(His) + L-histidine + ATP = L-histidyl-tRNA(His) + AMP + diphosphate + H(+). The protein is Histidine--tRNA ligase 1 of Bacillus thuringiensis subsp. konkukian (strain 97-27).